The sequence spans 314 residues: Torsin-2A (314 aa).

The signal sequence occupies residues 1-19; sequence MAVRWWIIPMLLLVPGSSG. 86–93 serves as a coordination point for ATP; the sequence is GWSGTGKT. Residues Asn-142 and Asn-283 are each glycosylated (N-linked (GlcNAc...) asparagine).

The protein belongs to the ClpA/ClpB family. Torsin subfamily. As to quaternary structure, homohexamer.

Its subcellular location is the endoplasmic reticulum lumen. The sequence is that of Torsin-2A (tor2a) from Xenopus laevis (African clawed frog).